We begin with the raw amino-acid sequence, 118 residues long: Na(+)/H(+) antiporter subunit G1 (118 aa).

Helical transmembrane passes span 9 to 29, 47 to 67, and 69 to 89; these read LAVI…IGII, LGAI…DGYI, and MQLI…SHLI.

The protein belongs to the CPA3 antiporters (TC 2.A.63) subunit G family. In terms of assembly, may form a heterooligomeric complex that consists of seven subunits: mnhA1, mnhB1, mnhC1, mnhD1, mnhE1, mnhF1 and mnhG1.

The protein localises to the cell membrane. In terms of biological role, mnh complex is a Na(+)/H(+) antiporter involved in Na(+) excretion. This chain is Na(+)/H(+) antiporter subunit G1 (mnhG1), found in Staphylococcus haemolyticus (strain JCSC1435).